A 333-amino-acid chain; its full sequence is Phosphate acyltransferase (333 aa).

The protein belongs to the PlsX family. Homodimer. Probably interacts with PlsY.

It localises to the cytoplasm. It catalyses the reaction a fatty acyl-[ACP] + phosphate = an acyl phosphate + holo-[ACP]. It functions in the pathway lipid metabolism; phospholipid metabolism. Its function is as follows. Catalyzes the reversible formation of acyl-phosphate (acyl-PO(4)) from acyl-[acyl-carrier-protein] (acyl-ACP). This enzyme utilizes acyl-ACP as fatty acyl donor, but not acyl-CoA. The sequence is that of Phosphate acyltransferase from Desulforamulus reducens (strain ATCC BAA-1160 / DSM 100696 / MI-1) (Desulfotomaculum reducens).